The chain runs to 499 residues: Lanosterol 14-alpha demethylase (499 aa).

A helical membrane pass occupies residues 13–35 (SAVLQMSLTSVLLTASVFTLTLG). Cysteine 441 is a heme binding site.

Belongs to the cytochrome P450 family. Requires heme as cofactor. In terms of tissue distribution, strongly expressed in intestine. Moderately expressed in liver, with higher levels in females compared to males. Also detected at low levels in brain, eye, kidney and testis.

The protein localises to the endoplasmic reticulum membrane. It localises to the membrane. The enzyme catalyses a 14alpha-methyl steroid + 3 reduced [NADPH--hemoprotein reductase] + 3 O2 = a Delta(14) steroid + formate + 3 oxidized [NADPH--hemoprotein reductase] + 4 H2O + 4 H(+). It catalyses the reaction lanosterol + 3 reduced [NADPH--hemoprotein reductase] + 3 O2 = 4,4-dimethyl-5alpha-cholesta-8,14,24-trien-3beta-ol + formate + 3 oxidized [NADPH--hemoprotein reductase] + 4 H2O + 4 H(+). The catalysed reaction is 24,25-dihydrolanosterol + 3 reduced [NADPH--hemoprotein reductase] + 3 O2 = 4,4-dimethyl-8,14-cholestadien-3beta-ol + formate + 3 oxidized [NADPH--hemoprotein reductase] + 4 H2O + 4 H(+). It carries out the reaction a 14alpha-methyl steroid + reduced [NADPH--hemoprotein reductase] + O2 = a 14alpha-hydroxymethyl steroid + oxidized [NADPH--hemoprotein reductase] + H2O + H(+). The enzyme catalyses a 14alpha-hydroxymethyl steroid + reduced [NADPH--hemoprotein reductase] + O2 = a 14alpha-formyl steroid + oxidized [NADPH--hemoprotein reductase] + 2 H2O + H(+). It catalyses the reaction a 14alpha-formyl steroid + reduced [NADPH--hemoprotein reductase] + O2 = a Delta(14) steroid + formate + oxidized [NADPH--hemoprotein reductase] + H2O + 2 H(+). The catalysed reaction is lanosterol + reduced [NADPH--hemoprotein reductase] + O2 = 32-hydroxylanosterol + oxidized [NADPH--hemoprotein reductase] + H2O + H(+). It carries out the reaction 32-hydroxylanosterol + reduced [NADPH--hemoprotein reductase] + O2 = 32-oxolanosterol + oxidized [NADPH--hemoprotein reductase] + 2 H2O + H(+). The enzyme catalyses 32-oxolanosterol + reduced [NADPH--hemoprotein reductase] + O2 = 4,4-dimethyl-5alpha-cholesta-8,14,24-trien-3beta-ol + formate + oxidized [NADPH--hemoprotein reductase] + H2O + 2 H(+). It catalyses the reaction 24,25-dihydrolanosterol + reduced [NADPH--hemoprotein reductase] + O2 = 32-hydroxy-24,25-dihydrolanosterol + oxidized [NADPH--hemoprotein reductase] + H2O + H(+). The catalysed reaction is 32-hydroxy-24,25-dihydrolanosterol + reduced [NADPH--hemoprotein reductase] + O2 = 32-oxo-24,25-dihydrolanosterol + oxidized [NADPH--hemoprotein reductase] + 2 H2O + H(+). It carries out the reaction 32-oxo-24,25-dihydrolanosterol + reduced [NADPH--hemoprotein reductase] + O2 = 4,4-dimethyl-8,14-cholestadien-3beta-ol + formate + oxidized [NADPH--hemoprotein reductase] + H2O + 2 H(+). It participates in steroid biosynthesis; zymosterol biosynthesis; zymosterol from lanosterol: step 1/6. Inhibited by ketoconazole. May also be inhibited to a lesser extent by propiconazole. Sterol 14alpha-demethylase that plays a critical role in the cholesterol biosynthesis pathway, being cholesterol the major sterol component in deuterostome membranes as well as a precursor for steroid hormone synthesis. Cytochrome P450 monooxygenase that catalyzes the three-step oxidative removal of the 14alpha-methyl group (C-32) of sterols such as lanosterol (lanosta-8,24-dien-3beta-ol) and 24,25-dihydrolanosterol (DHL) in the form of formate, and converts the sterols to 4,4-dimethyl-5alpha-cholesta-8,14,24-trien-3beta-ol and 4,4-dimethyl-8,14-cholestadien-3beta-ol, respectively, which are intermediates of cholesterol biosynthesis. Can also demethylate substrates not intrinsic to deuterostomes, such as eburicol (24-methylene-24,25-dihydrolanosterol), but at a lower rate than DHL. This chain is Lanosterol 14-alpha demethylase, found in Danio rerio (Zebrafish).